The following is a 174-amino-acid chain: Mating-type protein ALPHA2 (174 aa).

Residues 108 to 170 constitute a DNA-binding region (homeobox; TALE-type); sequence QPYRGHRFTK…NRRRKQKHPP (63 aa).

Belongs to the TALE/M-ATYP homeobox family. As to quaternary structure, forms a heterodimer with A1.

It is found in the nucleus. Functionally, mating type proteins are sequence specific DNA-binding proteins that act as master switches in yeast differentiation by controlling gene expression in a cell type-specific fashion. Transcriptional corepressor that acts in conjunction with A1 to repress transcription of haploid-specific genes and of MATALPHA1. The sequence is that of Mating-type protein ALPHA2 (MATALPHA2) from Nakaseomyces delphensis (Yeast).